The sequence spans 265 residues: Undecaprenyl-diphosphatase (265 aa).

Transmembrane regions (helical) follow at residues arginine 38 to leucine 58, arginine 75 to valine 95, proline 108 to glycine 128, valine 135 to proline 155, phenylalanine 181 to methionine 201, valine 215 to glycine 235, and valine 244 to alanine 264.

The protein belongs to the UppP family.

Its subcellular location is the cell inner membrane. The enzyme catalyses di-trans,octa-cis-undecaprenyl diphosphate + H2O = di-trans,octa-cis-undecaprenyl phosphate + phosphate + H(+). Its function is as follows. Catalyzes the dephosphorylation of undecaprenyl diphosphate (UPP). Confers resistance to bacitracin. The sequence is that of Undecaprenyl-diphosphatase from Xanthomonas axonopodis pv. citri (strain 306).